A 722-amino-acid polypeptide reads, in one-letter code: D-(-)-3-hydroxybutyrate oligomer hydrolase (722 aa).

Residues 1 to 11 show a composition bias toward polar residues; that stretch reads MQQRHLSQSAH. The interval 1 to 20 is disordered; that stretch reads MQQRHLSQSAHSHGHGTRRA. The signal sequence occupies residues 1-36; that stretch reads MQQRHLSQSAHSHGHGTRRAHRRNTIAIAVATLAVA. The active-site Charge relay system is the serine 327. The segment at 671–697 is disordered; it reads PPSQVVRTTPRGGADTDTVGPRIQPSN.

This sequence belongs to the D-(-)-3-hydroxybutyrate oligomer hydrolase family.

The protein localises to the secreted. It catalyses the reaction (3R)-hydroxybutanoate dimer + H2O = 2 (R)-3-hydroxybutanoate + H(+). It functions in the pathway lipid metabolism; butanoate metabolism. Functionally, participates in the degradation of poly-3-hydroxybutyrate (PHB). It works downstream of poly(3-hydroxybutyrate) depolymerase, hydrolyzing D(-)-3-hydroxybutyrate oligomers of various length (3HB-oligomers) into 3HB-monomers. This Cupriavidus metallidurans (strain ATCC 43123 / DSM 2839 / NBRC 102507 / CH34) (Ralstonia metallidurans) protein is D-(-)-3-hydroxybutyrate oligomer hydrolase.